The sequence spans 138 residues: Small ribosomal subunit protein uS11c (138 aa).

The protein belongs to the universal ribosomal protein uS11 family. In terms of assembly, part of the 30S ribosomal subunit.

It is found in the plastid. Its subcellular location is the chloroplast. The protein is Small ribosomal subunit protein uS11c of Acorus calamus (Sweet flag).